Here is a 970-residue protein sequence, read N- to C-terminus: Translation initiation factor IF-2 (970 aa).

2 disordered regions span residues 54 to 270 and 328 to 348; these read KILA…TATQ and DKRR…KSLS. Residues 87–96 are compositionally biased toward low complexity; that stretch reads QEAQPVEAQP. Over residues 98–112 the composition is skewed to polar residues; the sequence is YEEQPSYEEQPSYEE. Positions 121-149 are enriched in low complexity; sequence EVAAEAAPEPVEEPASSPEGGAPAGGAEP. Composition is skewed to pro residues over residues 150-160 and 168-182; these read QPAPEAPPPSA and PSAP…PAPS. Low complexity predominate over residues 183 to 253; that stretch reads VPAGAQPPGA…PHGPGAQPGQ (71 aa). The tr-type G domain maps to 469–638; that stretch reads IRPPVVTVMG…ALQSEVLELK (170 aa). A G1 region spans residues 478 to 485; it reads GHVDHGKT. 478–485 serves as a coordination point for GTP; it reads GHVDHGKT. Residues 503-507 form a G2 region; that stretch reads GITQH. The interval 524-527 is G3; the sequence is DTPG. Residues 524 to 528 and 578 to 581 contribute to the GTP site; these read DTPGH and NKID. A G4 region spans residues 578-581; it reads NKID. Residues 614–616 form a G5 region; it reads SAR.

The protein belongs to the TRAFAC class translation factor GTPase superfamily. Classic translation factor GTPase family. IF-2 subfamily.

It localises to the cytoplasm. In terms of biological role, one of the essential components for the initiation of protein synthesis. Protects formylmethionyl-tRNA from spontaneous hydrolysis and promotes its binding to the 30S ribosomal subunits. Also involved in the hydrolysis of GTP during the formation of the 70S ribosomal complex. This Anaeromyxobacter sp. (strain Fw109-5) protein is Translation initiation factor IF-2.